The sequence spans 472 residues: 2-(3-amino-3-carboxypropyl)histidine synthase subunit 1 (472 aa).

The [4Fe-4S] cluster site is built by C182, C285, and C421.

It belongs to the DPH1/DPH2 family. DPH1 subfamily. In terms of assembly, component of the 2-(3-amino-3-carboxypropyl)histidine synthase complex composed of dph1, dph2, dph3 and a NADH-dependent reductase. [4Fe-4S] cluster serves as cofactor.

The enzyme catalyses L-histidyl-[translation elongation factor 2] + S-adenosyl-L-methionine = 2-[(3S)-amino-3-carboxypropyl]-L-histidyl-[translation elongation factor 2] + S-methyl-5'-thioadenosine + H(+). The protein operates within protein modification; peptidyl-diphthamide biosynthesis. Its function is as follows. Catalyzes the first step of diphthamide biosynthesis, a post-translational modification of histidine which occurs in elongation factor 2. Dph1 and dph2 transfer a 3-amino-3-carboxypropyl (ACP) group from S-adenosyl-L-methionine (SAM) to a histidine residue, the reaction is assisted by a reduction system comprising dph3 and a NADH-dependent reductase. The protein is 2-(3-amino-3-carboxypropyl)histidine synthase subunit 1 (dph1) of Dictyostelium discoideum (Social amoeba).